A 1244-amino-acid chain; its full sequence is Structural polyprotein (1244 aa).

Positions 1-113 (MNSVFYNPFG…GKRQRTALKF (113 aa)) are disordered. A compositionally biased stretch (polar residues) spans 35-44 (GLTTQIQQLT). The segment at 35–69 (GLTTQIQQLTRAVRALVLDNATRRQRPAPRTRPRK) is host transcription inhibition. Residues 57–81 (RRQRPAPRTRPRKPKTQKPKPKKQN) show a composition bias toward basic residues. The short motif at 62 to 103 (APRTRPRKPKTQKPKPKKQNQKPPQQQKKGKNQPQQPKKPKP) is the Nuclear localization signal element. Over residues 82–97 (QKPPQQQKKGKNQPQQ) the composition is skewed to low complexity. Residues 85 to 118 (PQQQKKGKNQPQQPKKPKPGKRQRTALKFEADRT) form a binding to the viral RNA region. Residues 99 to 109 (KKPKPGKRQRT) are compositionally biased toward basic residues. The tract at residues 103 to 117 (PGKRQRTALKFEADR) is ribosome-binding. Positions 117–267 (RTFVGKNEDG…KTTHEDTVEW (151 aa)) constitute a Peptidase S3 domain. His-144 acts as the Charge relay system in catalysis. The Nuclear export signal signature appears at 149–159 (IDHPALAKLKF). The tract at residues 160-165 (TKSSSY) is interaction with spike glycoprotein E2. Residue Asp-166 is the Charge relay system of the active site. The interval 188–198 (PEVFYNWHHGA) is dimerization of the capsid protein. Ser-218 acts as the Charge relay system in catalysis. Positions 224 to 228 (DNSGK) are dimerization of the capsid protein. Positions 252-256 (KKGAA) are interaction with spike glycoprotein E2. Residues 268–280 (SRAITAMCILQNV) are functions as an uncleaved signal peptide for the precursor of protein E3/E2. At 268 to 696 (SRAITAMCIL…HYYHLYPFYT (429 aa)) the chain is on the extracellular side. Asn-279 carries an N-linked (GlcNAc...) asparagine; by host glycan. 4 disulfides stabilise this stretch: Cys-284-Cys-290, Cys-481-Cys-595, Cys-530-Cys-555, and Cys-532-Cys-549. N-linked (GlcNAc...) asparagine; by host glycosylation is present at Asn-525. Asn-647 carries N-linked (GlcNAc...) asparagine; by host glycosylation. A helical membrane pass occupies residues 697–717 (VTVLSGMGLAICAGLVISILC). Residues 718–751 (CCKARRDCLTPYQLAPNATVPFLVTLCCCFQRTS) are Cytoplasmic-facing. The interval 720 to 724 (KARRD) is interaction with the capsid protein. S-palmitoyl cysteine; by host attachment occurs at residues Cys-725, Cys-745, and Cys-746. Cys-725 and Cys-746 form a disulfide bridge. The Extracellular segment spans residues 752 to 764 (ADEFTDTMGYLWQ). The next 2 helical transmembrane spans lie at 765-785 (HSQT…ITLV) and 786-805 (RCCS…NKAD). The Extracellular portion of the chain corresponds to 806 to 1218 (AYEHTITVPN…KTSWNWITAL (413 aa)). Cystine bridges form between Cys-855–Cys-920, Cys-868–Cys-900, Cys-869–Cys-902, and Cys-874–Cys-884. The interval 890–907 (VYPFLWGGAQCFCDSENS) is E1 fusion peptide loop. 2 N-linked (GlcNAc...) asparagine; by host glycosylation sites follow: Asn-945 and Asn-1051. Cystine bridges form between Cys-1065–Cys-1077, Cys-1106–Cys-1181, Cys-1111–Cys-1185, and Cys-1133–Cys-1175. Residues 1219–1239 (MGGISSIAAIAAIVLVIALVF) traverse the membrane as a helical segment. At 1240-1244 (TAQHR) the chain is on the cytoplasmic side.

Homodimer. Homomultimer. Interacts with host karyopherin KPNA4; this interaction allows the nuclear import of the viral capsid protein. Interacts with spike glycoprotein E2. Interacts with host IRAK1; the interaction leads to inhibition of IRAK1-dependent signaling. In terms of assembly, the precursor of protein E3/E2 and E1 form a heterodimer shortly after synthesis. As to quaternary structure, the precursor of protein E3/E2 and E1 form a heterodimer shortly after synthesis. Processing of the precursor of protein E3/E2 into E2 and E3 results in a heterodimer of the spike glycoproteins E2 and E1. Spike at virion surface are constituted of a trimer of E2-E1 heterodimers. After target cell attachment and endocytosis, E1 change conformation to form homotrimers. Interacts with 6K protein. Interacts with spike glycoprotein E1. Processing of the precursor of protein E3/E2 into E2 and E3 results in a heterodimer of the spike glycoproteins E2 and E1. Spike at virion surface are constituted of a trimer of E2-E1 heterodimers. Interacts with 6K protein. In terms of assembly, oligomer. Interacts with spike glycoprotein E1. Interacts with spike glycoprotein E2. Structural polyprotein: Specific enzymatic cleavages in vivo yield mature proteins. Capsid protein is auto-cleaved during polyprotein translation, unmasking a signal peptide at the N-terminus of the precursor of E3/E2. The remaining polyprotein is then targeted to the host endoplasmic reticulum, where host signal peptidase cleaves it into pE2, 6K and E1 proteins. pE2 is further processed to mature E3 and E2 by host furin in trans-Golgi vesicle. Post-translationally, palmitoylated via thioester bonds. These palmitoylations may induce disruption of the C-terminus transmembrane. This would result in the reorientation of E2 C-terminus from lumenal to cytoplasmic side. In terms of processing, N-glycosylated. Palmitoylated via thioester bonds.

The protein resides in the virion. It is found in the host cytoplasm. Its subcellular location is the host cell membrane. It localises to the host nucleus. The protein localises to the virion membrane. The protein resides in the host Golgi apparatus. It is found in the host trans-Golgi network. Its subcellular location is the host endoplasmic reticulum. The enzyme catalyses Autocatalytic release of the core protein from the N-terminus of the togavirus structural polyprotein by hydrolysis of a -Trp-|-Ser- bond.. Forms an icosahedral capsid with a T=4 symmetry composed of 240 copies of the capsid protein surrounded by a lipid membrane through which penetrate 80 spikes composed of trimers of E1-E2 heterodimers. The capsid protein binds to the viral RNA genome at a site adjacent to a ribosome binding site for viral genome translation following genome release. Possesses a protease activity that results in its autocatalytic cleavage from the nascent structural protein. Following its self-cleavage, the capsid protein transiently associates with ribosomes, and within several minutes the protein binds to viral RNA and rapidly assembles into icosahedric core particles. The resulting nucleocapsid eventually associates with the cytoplasmic domain of the spike glycoprotein E2 at the cell membrane, leading to budding and formation of mature virions. In case of infection, new virions attach to target cells and after clathrin-mediated endocytosis their membrane fuses with the host endosomal membrane. This leads to the release of the nucleocapsid into the cytoplasm, followed by an uncoating event necessary for the genomic RNA to become accessible. The uncoating might be triggered by the interaction of capsid proteins with ribosomes. Binding of ribosomes would release the genomic RNA since the same region is genomic RNA-binding and ribosome-binding. Specifically inhibits interleukin-1 receptor-associated kinase 1/IRAK1-dependent signaling during viral entry, representing a means by which the alphaviruses may evade innate immune detection and activation prior to viral gene expression. Its function is as follows. Provides the signal sequence for the translocation of the precursor of protein E3/E2 to the host endoplasmic reticulum. Furin-cleaved E3 remains associated with spike glycoprotein E1 and mediates pH protection of the latter during the transport via the secretory pathway. After virion release from the host cell, the assembly protein E3 is gradually released in the extracellular space. Functionally, plays a role in viral attachment to target host cell, by binding to the cell receptor. Synthesized as a p62 precursor which is processed by furin at the cell membrane just before virion budding, giving rise to E2-E1 heterodimer. The p62-E1 heterodimer is stable, whereas E2-E1 is unstable and dissociate at low pH. p62 is processed at the last step, presumably to avoid E1 fusion activation before its final export to cell surface. E2 C-terminus contains a transitory transmembrane that would be disrupted by palmitoylation, resulting in reorientation of the C-terminal tail from lumenal to cytoplasmic side. This step is critical since E2 C-terminus is involved in budding by interacting with capsid proteins. This release of E2 C-terminus in cytoplasm occurs lately in protein export, and precludes premature assembly of particles at the endoplasmic reticulum membrane. In terms of biological role, acts as a viroporin that participates in virus glycoprotein processing and transport to the plasma membrane, cell permeabilization and budding of viral particles. Disrupts the calcium homeostasis of the cell, probably at the endoplasmic reticulum level. This leads to cytoplasmic calcium elevation. Because of its lipophilic properties, the 6K protein is postulated to influence the selection of lipids that interact with the transmembrane domains of the glycoproteins, which, in turn, affects the deformability of the bilayer required for the extreme curvature that occurs as budding proceeds. Present in low amount in virions, about 3% compared to viral glycoproteins. Class II viral fusion protein. Fusion activity is inactive as long as E1 is bound to E2 in mature virion. After virus attachment to target cell and endocytosis, acidification of the endosome induce dissociation of E1/E2 heterodimer and concomitant trimerization of the E1 subunits. This E1 trimer is fusion active, and promotes release of viral nucleocapsid in cytoplasm after endosome and viral membrane fusion. Efficient fusion requires the presence of cholesterol and sphingolipid in the target membrane. This is Structural polyprotein from Aedes (AURAV).